We begin with the raw amino-acid sequence, 301 residues long: Homeobox protein knotted-1-like 1 (301 aa).

The segment at 141–170 is disordered; sequence CSGATSPPATTATHSDEMVGSSDEDQCSGE. A compositionally biased stretch (low complexity) spans 144–153; the sequence is ATSPPATTAT. Positions 188-208 constitute an ELK domain; the sequence is ELKEMLLKKYSGCLSRLRSEF. A DNA-binding region (homeobox; TALE-type) is located at residues 209–272; the sequence is LKKRKKGKLP…NQRKRHWKPS (64 aa).

The protein belongs to the TALE/KNOX homeobox family.

The protein resides in the nucleus. Its function is as follows. Probable transcription factor that may be involved in shoot formation during early embryogenesis. The sequence is that of Homeobox protein knotted-1-like 1 (OSH6) from Oryza sativa subsp. japonica (Rice).